The following is a 445-amino-acid chain: Argininosuccinate synthase (445 aa).

ATP is bound by residues 17–25 (AFSGGLDTS) and Ala43. Residue Tyr99 coordinates L-citrulline. ATP is bound by residues Gly129 and Thr131. L-aspartate is bound by residues Thr131, Asn135, and Asp136. An L-citrulline-binding site is contributed by Asn135. Asp136 contributes to the ATP binding site. L-citrulline contacts are provided by Arg139 and Ser192. ATP is bound at residue Asp194. 3 residues coordinate L-citrulline: Thr201, Glu203, and Glu280.

The protein belongs to the argininosuccinate synthase family. Type 2 subfamily. Homotetramer.

Its subcellular location is the cytoplasm. The enzyme catalyses L-citrulline + L-aspartate + ATP = 2-(N(omega)-L-arginino)succinate + AMP + diphosphate + H(+). The protein operates within amino-acid biosynthesis; L-arginine biosynthesis; L-arginine from L-ornithine and carbamoyl phosphate: step 2/3. The sequence is that of Argininosuccinate synthase (argG) from Ralstonia nicotianae (strain ATCC BAA-1114 / GMI1000) (Ralstonia solanacearum).